The chain runs to 629 residues: Putrebactin synthase (629 aa).

It belongs to the IucA/IucC family. As to quaternary structure, homodimer.

The enzyme catalyses 2 N-(3-carboxypropanoyl)-N-hydroxyputrescine + 2 ATP = putrebactin + 2 AMP + 2 diphosphate + 2 H(+). The catalysed reaction is 2 N-(3-carboxypropanoyl)-N-hydroxyputrescine + ATP = pre-putrebactin + AMP + diphosphate + H(+). It catalyses the reaction pre-putrebactin + ATP = putrebactin + AMP + diphosphate + H(+). Its pathway is siderophore biosynthesis. Requires Mg(2+) for activity. Functionally, ligase involved in the biosynthesis of the siderophore putrebactin. Catalyzes the ATP-dependent head-to-tail dimerization of N-hydroxy-N-succinyl-putrescine (HSP) to give pre-putrebactin and subsequent macrocyclization of pre-putrebactin to give putrebactin. In Shewanella sp. (strain MR-4), this protein is Putrebactin synthase.